We begin with the raw amino-acid sequence, 203 residues long: Sporulation delaying protein C (203 aa).

Positions 1-32 (MKSKLLRLLIVSMVTILVFSLVGLSKESSTSA) are cleaved as a signal peptide. A propeptide spans 33–140 (KENHTFSGED…KYSSNKVTPS (108 aa)) (removed in mature form). Cys141 and Cys147 are disulfide-bonded. Residues 183–203 (SASNNSDLEAAAAKTLKLIHQ) constitute a propeptide, removed in mature form.

As to quaternary structure, proprotein probably interacts with chaperone CsaA. Post-translationally, production of active SDP (able to induce SdpI and kill cells) is a multi-step process that requires signal peptide cleavage (probably by SipS or SipT) as well as SdpA and SdpB. The disulfide bond is not required for maximum toxicity.

The protein resides in the secreted. Produces a 42-residue extracellular sporulation delaying protein (SDP) that collapses the proton motive force (probably both the membrane potential and pH gradient) across the cell membrane, which leads to autolysis; may form a proton channel. Induces the lysis of other B.subtilis cells that have not entered the sporulation pathway, inducing cannibalism to provide a source of nutrients to support sporulation, and at the same time delaying commitment to the energetically expensive and irreversible onset of sporulation. Addition of SDP to liquid cultures halts growth, leads to increased cell permeability and eventually cell lysis in a significant subset of the population, although some cells survive and resume growth after a lag period. Effects of SDP are irreversible within 10 minutes. Addition of SDP to solid cultures induces killing, it is much more effective than SKF (AC O31422). Has antibiotic action against Gram-positive Firmicutes (L.acidophilus, M.megaterium, P.polymyxa, S.aureus, S.epidermidis) but not Actinobacteria M.luteus or Gram-negative P.aeruginosa or K.pneumoniae. SDP induces expression of the sdpR-sdpI operon. Its maturation is dependent on SdpA and SdpB. Also functions as a ligand, binds to SdpI triggering a signal transduction cascade that protects the cell against the toxic effects of its own SDP. The protein is Sporulation delaying protein C of Bacillus subtilis (strain 168).